The chain runs to 404 residues: G1/S-specific cyclin-E2 (404 aa).

The segment at 1–44 (MSRRSSRLQAKQQPQPSQTESPQEAQIIQAKKRKTTQDVKKRRE) is disordered. Residues 12 to 26 (QQPQPSQTESPQEAQ) are compositionally biased toward low complexity. S21 carries the post-translational modification Phosphoserine. The segment covering 35–44 (TTQDVKKRRE) has biased composition (basic and acidic residues). K348 is modified (N6-lactoyllysine). S383 carries the phosphoserine modification. T392 carries the phosphothreonine modification.

This sequence belongs to the cyclin family. Cyclin E subfamily. As to quaternary structure, interacts with the CDK2 (in vivo) and CDK3 (in vitro) protein kinases to form a serine/threonine kinase holoenzyme complex. The cyclin subunit imparts substrate specificity to the complex. Phosphorylation by CDK2 triggers its release from CDK2 and degradation via the ubiquitin proteasome pathway. Post-translationally, lactylated at Lys-348. Delactylated by SIRT3. As to expression, according to PubMed:9858585, highest levels of expression in adult testis, thymus and brain. Lower levels in placenta, spleen and colon. Consistently elevated levels in tumor-derived cells compared to non-transformed proliferating cells. According to PubMed:9840927: low levels in thymus, prostate, brain, skeletal muscle, and kidney. Elevated levels in lung. According to PubMed:9840943 highly expressed in testis, placenta, thymus and brain. In a lesser extent in small intestine and colon.

It is found in the nucleus. Essential for the control of the cell cycle at the late G1 and early S phase. The protein is G1/S-specific cyclin-E2 (CCNE2) of Homo sapiens (Human).